Reading from the N-terminus, the 249-residue chain is Enolase-phosphatase E1 (249 aa).

The protein belongs to the HAD-like hydrolase superfamily. MasA/MtnC family. As to quaternary structure, monomer. Mg(2+) is required as a cofactor.

The catalysed reaction is 5-methylsulfanyl-2,3-dioxopentyl phosphate + H2O = 1,2-dihydroxy-5-(methylsulfanyl)pent-1-en-3-one + phosphate. The protein operates within amino-acid biosynthesis; L-methionine biosynthesis via salvage pathway; L-methionine from S-methyl-5-thio-alpha-D-ribose 1-phosphate: step 3/6. It functions in the pathway amino-acid biosynthesis; L-methionine biosynthesis via salvage pathway; L-methionine from S-methyl-5-thio-alpha-D-ribose 1-phosphate: step 4/6. In terms of biological role, bifunctional enzyme that catalyzes the enolization of 2,3-diketo-5-methylthiopentyl-1-phosphate (DK-MTP-1-P) into the intermediate 2-hydroxy-3-keto-5-methylthiopentenyl-1-phosphate (HK-MTPenyl-1-P), which is then dephosphorylated to form the acireductone 1,2-dihydroxy-3-keto-5-methylthiopentene (DHK-MTPene). The sequence is that of Enolase-phosphatase E1 from Pseudomonas aeruginosa (strain ATCC 15692 / DSM 22644 / CIP 104116 / JCM 14847 / LMG 12228 / 1C / PRS 101 / PAO1).